The chain runs to 1164 residues: Phospholipid-transporting ATPase IA (1164 aa).

At 1 to 75 (MPTMRRTVSE…PRFLYSQFRR (75 aa)) the chain is on the cytoplasmic side. A Phosphoserine modification is found at Ser-25. At Thr-28 the chain carries Phosphothreonine. Ser-29 is modified (phosphoserine). The chain crosses the membrane as a helical span at residues 76-96 (AANSFFLFIALLQQIPDVSPT). Residues 97–100 (GRYT) are Exoplasmic loop-facing. A helical membrane pass occupies residues 101–121 (TLVPLLFILAVAAIKEIIEDI). Topologically, residues 122 to 297 (KRHKADNAVN…SNVERITNVQ (176 aa)) are cytoplasmic. Residues 298 to 318 (ILILFCILIAMSLVCSVGSAI) traverse the membrane as a helical segment. The Exoplasmic loop segment spans residues 319 to 339 (WNRRHSGKDWYLHLHYGGASN). A helical transmembrane segment spans residues 340–360 (FGLNFLTFIILFNNLIPISLL). Over 361-866 (VTLEVVKFTQ…KCILYCFYKN (506 aa)) the chain is Cytoplasmic. The active-site 4-aspartylphosphate intermediate is the Asp-409. ATP contacts are provided by Asp-409, Lys-410, and Thr-411. A Mg(2+)-binding site is contributed by Asp-409. Thr-411 serves as a coordination point for Mg(2+). Ser-443 carries the post-translational modification Phosphoserine. ATP contacts are provided by residues Glu-508, Phe-549, Lys-572, Arg-605, Thr-685, Gly-686, Asp-687, 741-748 (ALIIDGKT), Arg-775, and Lys-781. Mg(2+) is bound at residue Asp-801. Positions 804 and 805 each coordinate ATP. Asp-805 contributes to the Mg(2+) binding site. Residues 867-887 (IVLYIIEIWFAFVNGFSGQIL) traverse the membrane as a helical segment. Residues 888 to 890 (FER) are Exoplasmic loop-facing. A helical membrane pass occupies residues 891-911 (WCIGLYNVMFTAMPPLTLGIF). The Cytoplasmic segment spans residues 912 to 939 (ERSCRKENMLKYPELYKTSQNALDFNTK). Residues 940 to 960 (VFWVHCLNGLFHSVILFWFPL) traverse the membrane as a helical segment. Over 961–977 (KALQYGTVFGNGKTSDY) the chain is Exoplasmic loop. A helical transmembrane segment spans residues 978-998 (LLLGNFVYTFVVITVCLKAGL). Residues 999-1008 (ETSYWTWFSH) lie on the Cytoplasmic side of the membrane. The chain crosses the membrane as a helical span at residues 1009-1029 (IAIWGSIALWVVFFGIYSSLW). Residues 1030–1044 (PAVPMAPDMSGEAAM) are Exoplasmic loop-facing. The chain crosses the membrane as a helical span at residues 1045-1065 (LFSSGVFWVGLLSIPVASLLL). Residues 1066–1164 (DVLYKVIKRT…DTTKQRPDEW (99 aa)) are Cytoplasmic-facing. 1095–1102 (GAVVLGKS) provides a ligand contact to ATP. At Ser-1126 the chain carries Phosphoserine.

Belongs to the cation transport ATPase (P-type) (TC 3.A.3) family. Type IV subfamily. As to quaternary structure, component of a P4-ATPase flippase complex which consists of a catalytic alpha subunit and an accessory beta subunit. Interacts with TMEM30A to form a flippase complex; this complex forms an intermediate phosphoenzyme. Interacts with TMEM30B; this interaction is reported conflictingly. Mg(2+) serves as cofactor. Cleaved by calpain in a caspase- and calcium influx-dependent manner only during platelet apoptosis and may lead to inactivation. As to expression, found in most tissues except liver and testis. Most abundant in brain and lung. Also detected in fetal tissues. Isoform 1 is expressed in brain. Isoform 2 and isoform 3 are expressed in reticulocytes. Expressed in mouse hippocampus in both dentate gyrus (DG) and the CA3 regions. Expressed in both neuronal as well as non-neuronal cells within the DG. Highly expressed in platelets.

Its subcellular location is the cytoplasmic vesicle. The protein resides in the secretory vesicle. It is found in the chromaffin granule membrane. The protein localises to the cytoplasmic granule. It localises to the cell membrane. Its subcellular location is the endoplasmic reticulum. The protein resides in the golgi apparatus. It is found in the endomembrane system. The catalysed reaction is ATP + H2O + phospholipidSide 1 = ADP + phosphate + phospholipidSide 2.. It catalyses the reaction a 1,2-diacyl-sn-glycero-3-phospho-L-serine(out) + ATP + H2O = a 1,2-diacyl-sn-glycero-3-phospho-L-serine(in) + ADP + phosphate + H(+). ATPase activity is stimulated by phosphatidylserine (PS) and minimally by phosphatidylethanolamine (PE). ATPase activity is inhibited by the vanadate and by the presence of calcium. Functionally, catalytic component of a P4-ATPase flippase complex which catalyzes the hydrolysis of ATP coupled to the transport of aminophospholipids from the outer to the inner leaflet of various membranes and ensures the maintenance of asymmetric distribution of phospholipids. Phospholipid translocation also seems to be implicated in vesicle formation and in uptake of lipid signaling molecules. In vitro, its ATPase activity is selectively and stereospecifically stimulated by phosphatidylserine (PS). The flippase complex ATP8A1:TMEM30A seems to play a role in regulation of cell migration probably involving flippase-mediated translocation of phosphatidylethanolamine (PE) at the cell membrane. Acts as aminophospholipid translocase at the cell membrane in neuronal cells; the activity is associated with hippocampus-dependent learning. May play a role in brain connectivity. This chain is Phospholipid-transporting ATPase IA, found in Mus musculus (Mouse).